Reading from the N-terminus, the 436-residue chain is Histidine--tRNA ligase (436 aa).

Belongs to the class-II aminoacyl-tRNA synthetase family. As to quaternary structure, homodimer.

It localises to the cytoplasm. It carries out the reaction tRNA(His) + L-histidine + ATP = L-histidyl-tRNA(His) + AMP + diphosphate + H(+). This Prochlorococcus marinus (strain MIT 9313) protein is Histidine--tRNA ligase.